Reading from the N-terminus, the 25-residue chain is Antimicrobial peptide THP3 (25 aa).

Its subcellular location is the secreted. Functionally, bactericidal activity; inhibits Staphylococcus aureus. The chain is Antimicrobial peptide THP3 from Meleagris gallopavo (Wild turkey).